A 274-amino-acid chain; its full sequence is MTGFGLRLAEAKARRGPLCLGIDPHPELLRGWDLATTADGLAAFCDICVRAFADFAVVKPQVAFFESYGAAGFAVLERTIAELRAADVLVLADAKRGDIGATMSAYATAWVGDSPLAADAVTASPYLGFGSLRPLLEVAAAHGRGVFVLAATSNPEGAAVQNAAADGRSVAQLVVDQVGAANEAAGPGPGSIGVVVGATAPQAPDLSAFTGPVLVPGVGVQGGRPEALGGLGGAASSQLLPAVAREVLRAGPGVPELRAAGERMRDAVAYLAAV.

The active-site Proton donor is the K95.

The protein belongs to the OMP decarboxylase family. Type 2 subfamily.

The enzyme catalyses orotidine 5'-phosphate + H(+) = UMP + CO2. The protein operates within pyrimidine metabolism; UMP biosynthesis via de novo pathway; UMP from orotate: step 2/2. In Mycobacterium bovis (strain ATCC BAA-935 / AF2122/97), this protein is Orotidine 5'-phosphate decarboxylase (pyrF).